The following is a 257-amino-acid chain: Pyridoxine 5'-phosphate synthase (257 aa).

Asparagine 6 contacts 3-amino-2-oxopropyl phosphate. 8–9 lines the 1-deoxy-D-xylulose 5-phosphate pocket; the sequence is DH. Arginine 17 is a binding site for 3-amino-2-oxopropyl phosphate. Catalysis depends on histidine 41, which acts as the Proton acceptor. The 1-deoxy-D-xylulose 5-phosphate site is built by arginine 43 and histidine 48. Glutamate 68 functions as the Proton acceptor in the catalytic mechanism. Threonine 98 is a binding site for 1-deoxy-D-xylulose 5-phosphate. Histidine 210 (proton donor) is an active-site residue. 3-amino-2-oxopropyl phosphate is bound by residues glycine 211 and 232 to 233; that span reads GQ.

Belongs to the PNP synthase family. Homooctamer; tetramer of dimers.

Its subcellular location is the cytoplasm. The enzyme catalyses 3-amino-2-oxopropyl phosphate + 1-deoxy-D-xylulose 5-phosphate = pyridoxine 5'-phosphate + phosphate + 2 H2O + H(+). It functions in the pathway cofactor biosynthesis; pyridoxine 5'-phosphate biosynthesis; pyridoxine 5'-phosphate from D-erythrose 4-phosphate: step 5/5. In terms of biological role, catalyzes the complicated ring closure reaction between the two acyclic compounds 1-deoxy-D-xylulose-5-phosphate (DXP) and 3-amino-2-oxopropyl phosphate (1-amino-acetone-3-phosphate or AAP) to form pyridoxine 5'-phosphate (PNP) and inorganic phosphate. The sequence is that of Pyridoxine 5'-phosphate synthase from Campylobacter jejuni subsp. doylei (strain ATCC BAA-1458 / RM4099 / 269.97).